The sequence spans 994 residues: Sarcoplasmic/endoplasmic reticulum calcium ATPase 1 (994 aa).

Over 1–48 (MENAHAKTAEECLAFFGVNESVGLSGEQVRRALEKYGHNELPAEEGKT) the chain is Cytoplasmic. A helical transmembrane segment spans residues 49-69 (IWELVVEQFEDLLVRILLLAA). Topologically, residues 70 to 89 (CISFVLAWFEEGEETITAFV) are lumenal. The helical transmembrane segment at 90-110 (EPFVILLILIANAVVGVWQER) threads the bilayer. The Cytoplasmic portion of the chain corresponds to 111–253 (NAENAIEALK…QDKTPLQQKL (143 aa)). The helical transmembrane segment at 254-273 (DEFGEQLSKVISLICVAVWL) threads the bilayer. The Lumenal portion of the chain corresponds to 274 to 295 (INIGHFNDPVHGGSWIRGAIYY). A helical membrane pass occupies residues 296-313 (FKIAVALAVAAIPEGLPA). Residues Val-304, Ala-305, Ile-307, and Glu-309 each contribute to the Ca(2+) site. Residues 314 to 757 (VITTCLALGT…EEGRAIYNNM (444 aa)) are Cytoplasmic-facing. The active-site 4-aspartylphosphate intermediate is the Asp-351. Mg(2+) is bound by residues Asp-351 and Thr-353. The ATP site is built by Thr-353, Glu-442, Arg-489, Lys-515, Arg-560, Thr-625, Gly-626, Asp-627, Arg-678, and Lys-684. A Mg(2+)-binding site is contributed by Asp-703. Asn-706 serves as a coordination point for ATP. A helical membrane pass occupies residues 758–777 (KQFIRYLISSNVGEVVCIFL). Ca(2+) contacts are provided by Asn-768 and Glu-771. Residues 778–787 (TAALGLPEAL) lie on the Lumenal side of the membrane. A helical membrane pass occupies residues 788-808 (IPVQLLWVNLVTDGLPATALG). The segment at 788 to 808 (IPVQLLWVNLVTDGLPATALG) is interaction with PLN. Asn-796, Thr-799, and Asp-800 together coordinate Ca(2+). Over 809 to 828 (FNPPDLDIMDKPPRSPKEPL) the chain is Cytoplasmic. Residues 829-851 (ISGWLFFRYLAIGGYVGAATVGA) traverse the membrane as a helical segment. At 852–897 (AAWWFLYAEDGPSLTYHQLTHFMQCTHHNAEFEGVDCDIFESPVPM) the chain is on the lumenal side. A disulfide bond links Cys-876 and Cys-888. Residues 898 to 917 (TMALSVLVTIEMCNALNSLS) form a helical membrane-spanning segment. A Ca(2+)-binding site is contributed by Glu-908. The Cytoplasmic segment spans residues 918–930 (ENQSLLRMPPWVN). The helical transmembrane segment at 931–949 (IWLVGSICLSMSLHFVILY) threads the bilayer. Residues 932 to 943 (WLVGSICLSMSL) form an interaction with PLN region. Topologically, residues 950-964 (VDPLPMIFKLTHLDL) are lumenal. The helical transmembrane segment at 965–985 (AHWLVVLRISFPVILLDEALK) threads the bilayer. Residues 986-994 (FVARNYLEA) lie on the Cytoplasmic side of the membrane.

It belongs to the cation transport ATPase (P-type) (TC 3.A.3) family. Type IIA subfamily. Interacts with sarcolipin (SLN). Interacts with phospholamban (PLN). Interacts with myoregulin (MRLN). Interacts with DWORF. Requires Mg(2+) as cofactor.

The protein localises to the endoplasmic reticulum membrane. It is found in the sarcoplasmic reticulum membrane. It carries out the reaction Ca(2+)(in) + ATP + H2O = Ca(2+)(out) + ADP + phosphate + H(+). Inhibited by sarcolipin (SLN) and myoregulin (MRLN). Also shown to be inhibited by phospholamban (PLN) in vitro. Enhanced by DWORF; DWORF increases activity by displacing sarcolipin (SLN), phospholamban (PLN) and myoregulin (MRLN). In terms of biological role, key regulator of striated muscle performance by acting as the major Ca(2+) ATPase responsible for the reuptake of cytosolic Ca(2+) into the sarcoplasmic reticulum. Catalyzes the hydrolysis of ATP coupled with the translocation of calcium from the cytosol to the sarcoplasmic reticulum lumen. Contributes to calcium sequestration involved in muscular excitation/contraction. The protein is Sarcoplasmic/endoplasmic reticulum calcium ATPase 1 (ATP2A1) of Gallus gallus (Chicken).